Reading from the N-terminus, the 100-residue chain is Aspartyl/glutamyl-tRNA(Asn/Gln) amidotransferase subunit C (100 aa).

It belongs to the GatC family. In terms of assembly, heterotrimer of A, B and C subunits.

The enzyme catalyses L-glutamyl-tRNA(Gln) + L-glutamine + ATP + H2O = L-glutaminyl-tRNA(Gln) + L-glutamate + ADP + phosphate + H(+). It carries out the reaction L-aspartyl-tRNA(Asn) + L-glutamine + ATP + H2O = L-asparaginyl-tRNA(Asn) + L-glutamate + ADP + phosphate + 2 H(+). Functionally, allows the formation of correctly charged Asn-tRNA(Asn) or Gln-tRNA(Gln) through the transamidation of misacylated Asp-tRNA(Asn) or Glu-tRNA(Gln) in organisms which lack either or both of asparaginyl-tRNA or glutaminyl-tRNA synthetases. The reaction takes place in the presence of glutamine and ATP through an activated phospho-Asp-tRNA(Asn) or phospho-Glu-tRNA(Gln). The polypeptide is Aspartyl/glutamyl-tRNA(Asn/Gln) amidotransferase subunit C (Streptococcus pneumoniae (strain Hungary19A-6)).